The chain runs to 125 residues: uncharacterized protein (125 aa).

It to transposase of insertion sequence IS6501.

This is an uncharacterized protein from Sinorhizobium fredii (strain NBRC 101917 / NGR234).